The sequence spans 544 residues: CTP synthase (544 aa).

Positions Met1–Leu265 are amidoligase domain. Ser13 is a CTP binding site. UTP is bound at residue Ser13. ATP is bound by residues Ser14–Ile19 and Asp71. Positions 71 and 139 each coordinate Mg(2+). Residues Asp146 to Glu148, Lys186 to Gln191, and Lys222 contribute to the CTP site. UTP contacts are provided by residues Lys186–Gln191 and Lys222. The region spanning Thr290 to Glu541 is the Glutamine amidotransferase type-1 domain. Gly351 contributes to the L-glutamine binding site. The Nucleophile; for glutamine hydrolysis role is filled by Cys378. L-glutamine contacts are provided by residues Leu379–Gln382, Glu402, and Arg469. Residues His514 and Glu516 contribute to the active site.

The protein belongs to the CTP synthase family. In terms of assembly, homotetramer.

It carries out the reaction UTP + L-glutamine + ATP + H2O = CTP + L-glutamate + ADP + phosphate + 2 H(+). The enzyme catalyses L-glutamine + H2O = L-glutamate + NH4(+). It catalyses the reaction UTP + NH4(+) + ATP = CTP + ADP + phosphate + 2 H(+). It functions in the pathway pyrimidine metabolism; CTP biosynthesis via de novo pathway; CTP from UDP: step 2/2. With respect to regulation, allosterically activated by GTP, when glutamine is the substrate; GTP has no effect on the reaction when ammonia is the substrate. The allosteric effector GTP functions by stabilizing the protein conformation that binds the tetrahedral intermediate(s) formed during glutamine hydrolysis. Inhibited by the product CTP, via allosteric rather than competitive inhibition. In terms of biological role, catalyzes the ATP-dependent amination of UTP to CTP with either L-glutamine or ammonia as the source of nitrogen. Regulates intracellular CTP levels through interactions with the four ribonucleotide triphosphates. The protein is CTP synthase of Dichelobacter nodosus (strain VCS1703A).